Consider the following 228-residue polypeptide: Translin (228 aa).

A DNA/RNA binding region spans residues 86 to 90 (RFHEH). A leucine-zipper region spans residues 177–198 (LDSGFRLLNLKNDSLRKRYDGL). Lys-187 is subject to N6-acetyllysine. Phosphoserine is present on Ser-190. An N6-acetyllysine modification is found at Lys-199.

The protein belongs to the translin family. As to quaternary structure, ring-shaped heterooctamer of six TSN and two TSNAX subunits, DNA/RNA binding occurs inside the ring.

The protein localises to the cytoplasm. The protein resides in the nucleus. In terms of biological role, DNA-binding protein that specifically recognizes consensus sequences at the breakpoint junctions in chromosomal translocations, mostly involving immunoglobulin (Ig)/T-cell receptor gene segments. Seems to recognize single-stranded DNA ends generated by staggered breaks occurring at recombination hot spots. Exhibits both single-stranded and double-stranded endoribonuclease activity. May act as an activator of RNA-induced silencing complex (RISC) by facilitating endonucleolytic cleavage of the siRNA passenger strand. The sequence is that of Translin (Tsn) from Mus musculus (Mouse).